The following is an 80-amino-acid chain: Diphthamide biosynthesis protein 3 (80 aa).

Positions 4–60 (FHDEVEIEDFEFDEEKDVYHYPCPCGDRFEIPREMLEMGEDVAQCPSCSLLIRVIYD) constitute a DPH-type MB domain. Positions 26, 28, 48, and 51 each coordinate Fe cation.

The protein belongs to the DPH3 family. Component of the 2-(3-amino-3-carboxypropyl)histidine synthase complex composed of dph-1, dph-2, dph-3 and a NADH-dependent reductase. Fe(2+) serves as cofactor.

It catalyses the reaction [3Fe-4S](1+)-[protein] + Fe(2+)-[Dph3] = [3Fe-4S](0)-[protein] + Fe(3+)-[Dph3]. It carries out the reaction 2 [3Fe-4S](0)-[protein] + 2 Fe(2+)-[Dph3] + NADH = 2 [4Fe-4S](1+)-[protein] + 2 [Dph3] + NAD(+) + H(+). It functions in the pathway protein modification; peptidyl-diphthamide biosynthesis. Functionally, required for the first step of diphthamide biosynthesis, a post-translational modification of histidine which occurs in elongation factor 2. Dph-1 and dph-2 transfer a 3-amino-3-carboxypropyl (ACP) group from S-adenosyl-L-methionine (SAM) to a histidine residue, the reaction is assisted by a reduction system comprising dph-3 and a NADH-dependent reductase. Acts as an electron donor to reduce the Fe-S cluster in dph1-dph2 keeping the [4Fe-4S] clusters in the active and reduced state. Restores iron to dph-1-dph-2 iron-sulfur clusters which have degraded from [4Fe-4S] to [3Fe-4S] by donating an iron atom to reform [4Fe-4S] clusters, in a manner dependent on the presence of elongation factor 2 and SAM. Associates with the elongator complex and is required for tRNA Wobble base modifications mediated by the elongator complex. The elongator complex is required for multiple tRNA modifications, including mcm5U (5-methoxycarbonylmethyl uridine), mcm5s 2U (5-methoxycarbonylmethyl-2-thiouridine), and ncm5U (5-carbamoylmethyl uridine). This Caenorhabditis elegans protein is Diphthamide biosynthesis protein 3.